The sequence spans 226 residues: UPF0173 metal-dependent hydrolase GWCH70_2696 (226 aa).

Belongs to the UPF0173 family.

This is UPF0173 metal-dependent hydrolase GWCH70_2696 from Geobacillus sp. (strain WCH70).